We begin with the raw amino-acid sequence, 199 residues long: ATP-dependent Clp protease proteolytic subunit (199 aa).

Residue Ser103 is the Nucleophile of the active site. The active site involves His128.

Belongs to the peptidase S14 family. Fourteen ClpP subunits assemble into 2 heptameric rings which stack back to back to give a disk-like structure with a central cavity, resembling the structure of eukaryotic proteasomes.

Its subcellular location is the cytoplasm. It catalyses the reaction Hydrolysis of proteins to small peptides in the presence of ATP and magnesium. alpha-casein is the usual test substrate. In the absence of ATP, only oligopeptides shorter than five residues are hydrolyzed (such as succinyl-Leu-Tyr-|-NHMec, and Leu-Tyr-Leu-|-Tyr-Trp, in which cleavage of the -Tyr-|-Leu- and -Tyr-|-Trp bonds also occurs).. Cleaves peptides in various proteins in a process that requires ATP hydrolysis. Has a chymotrypsin-like activity. Plays a major role in the degradation of misfolded proteins. This is ATP-dependent Clp protease proteolytic subunit from Photobacterium profundum (strain SS9).